A 172-amino-acid chain; its full sequence is ATP synthase subunit b (172 aa).

The chain crosses the membrane as a helical span at residues 12–32; that stretch reads VGFNAGTMLFQLVAMLILLAL.

The protein belongs to the ATPase B chain family. As to quaternary structure, F-type ATPases have 2 components, F(1) - the catalytic core - and F(0) - the membrane proton channel. F(1) has five subunits: alpha(3), beta(3), gamma(1), delta(1), epsilon(1). F(0) has three main subunits: a(1), b(2) and c(10-14). The alpha and beta chains form an alternating ring which encloses part of the gamma chain. F(1) is attached to F(0) by a central stalk formed by the gamma and epsilon chains, while a peripheral stalk is formed by the delta and b chains.

Its subcellular location is the cell membrane. Functionally, f(1)F(0) ATP synthase produces ATP from ADP in the presence of a proton or sodium gradient. F-type ATPases consist of two structural domains, F(1) containing the extramembraneous catalytic core and F(0) containing the membrane proton channel, linked together by a central stalk and a peripheral stalk. During catalysis, ATP synthesis in the catalytic domain of F(1) is coupled via a rotary mechanism of the central stalk subunits to proton translocation. Its function is as follows. Component of the F(0) channel, it forms part of the peripheral stalk, linking F(1) to F(0). This Bacillus licheniformis (strain ATCC 14580 / DSM 13 / JCM 2505 / CCUG 7422 / NBRC 12200 / NCIMB 9375 / NCTC 10341 / NRRL NRS-1264 / Gibson 46) protein is ATP synthase subunit b.